An 83-amino-acid polypeptide reads, in one-letter code: RNA-binding protein Hfq (83 aa).

The 60-residue stretch at 10 to 69 (DPFLNALRREHVPVSIYLVNGIKLQGQIESFDQYVVLLRNTVTQMVYKHAISTIVPGRAV) folds into the Sm domain.

The protein belongs to the Hfq family. As to quaternary structure, homohexamer.

In terms of biological role, RNA chaperone that binds small regulatory RNA (sRNAs) and mRNAs to facilitate mRNA translational regulation in response to envelope stress, environmental stress and changes in metabolite concentrations. Also binds with high specificity to tRNAs. In Delftia acidovorans (strain DSM 14801 / SPH-1), this protein is RNA-binding protein Hfq.